Reading from the N-terminus, the 552-residue chain is Urocanate hydratase (552 aa).

Residues 48–49 (GG), Gln-126, 172–174 (GMG), Asp-192, 238–239 (NA), 259–263 (QTSAH), 268–269 (YL), and Tyr-317 each bind NAD(+). Cys-405 is a catalytic residue. An NAD(+)-binding site is contributed by Gly-487.

It belongs to the urocanase family. Requires NAD(+) as cofactor.

It localises to the cytoplasm. The enzyme catalyses 4-imidazolone-5-propanoate = trans-urocanate + H2O. The protein operates within amino-acid degradation; L-histidine degradation into L-glutamate; N-formimidoyl-L-glutamate from L-histidine: step 2/3. Catalyzes the conversion of urocanate to 4-imidazolone-5-propionate. The chain is Urocanate hydratase from Streptomyces griseus subsp. griseus (strain JCM 4626 / CBS 651.72 / NBRC 13350 / KCC S-0626 / ISP 5235).